Consider the following 72-residue polypeptide: Translation initiation factor IF-1 (72 aa).

In terms of domain architecture, S1-like spans 1 to 72 (MAKEDVIEFS…TKGRITFRYK (72 aa)).

The protein belongs to the IF-1 family. As to quaternary structure, component of the 30S ribosomal translation pre-initiation complex which assembles on the 30S ribosome in the order IF-2 and IF-3, IF-1 and N-formylmethionyl-tRNA(fMet); mRNA recruitment can occur at any time during PIC assembly.

Its subcellular location is the cytoplasm. In terms of biological role, one of the essential components for the initiation of protein synthesis. Stabilizes the binding of IF-2 and IF-3 on the 30S subunit to which N-formylmethionyl-tRNA(fMet) subsequently binds. Helps modulate mRNA selection, yielding the 30S pre-initiation complex (PIC). Upon addition of the 50S ribosomal subunit IF-1, IF-2 and IF-3 are released leaving the mature 70S translation initiation complex. This Paramagnetospirillum magneticum (strain ATCC 700264 / AMB-1) (Magnetospirillum magneticum) protein is Translation initiation factor IF-1.